The chain runs to 185 residues: Lysine-rich arabinogalactan protein 17 (185 aa).

Positions 1-21 (MTRNILLTVTLICIVFITVGG) are cleaved as a signal peptide. A disordered region spans residues 25-160 (ATAPIHSPST…FSPAADDQSG (136 aa)). Residues 43–68 (SPAISPAAPTPESTEAPAKTPVEAPV) show a composition bias toward low complexity. Residues 69-88 (EAPPSPTPASTPQISPPAPS) are compositionally biased toward pro residues. Residues 111–122 (TKHKKKTKKHKT) are compositionally biased toward basic residues. The span at 135–146 (PPAPPGEAPGPG) shows a compositional bias: pro residues. The GPI-anchor amidated serine moiety is linked to residue Ser-159. Positions 160–185 (GAQRISVVIQMVGAAAIAWSLLVLAF) are cleaved as a propeptide — removed in mature form.

It belongs to the lysine-rich AGP family. O-glycosylated on the hydroxyproline residues. As to expression, predominantly expressed in open flowers. Also expressed in leaves and stems, and at a lower level in roots.

It localises to the cell membrane. Proteoglycan that seems to be implicated in diverse developmental roles such as differentiation, cell-cell recognition, embryogenesis and programmed cell death. This chain is Lysine-rich arabinogalactan protein 17 (AGP17), found in Arabidopsis thaliana (Mouse-ear cress).